Reading from the N-terminus, the 127-residue chain is Chorismate mutase AroH (127 aa).

One can recognise a Chorismate mutase aroH-type domain in the interval 3–121 (IRGIRGATTV…VVVLRPDLSL (119 aa)). Prephenate contacts are provided by residues Arg-7, 74 to 78 (TCMQE), Arg-90, and Tyr-108.

As to quaternary structure, homotrimer.

The protein resides in the cytoplasm. The catalysed reaction is chorismate = prephenate. It functions in the pathway metabolic intermediate biosynthesis; prephenate biosynthesis; prephenate from chorismate: step 1/1. In terms of biological role, catalyzes the Claisen rearrangement of chorismate to prephenate. Probably involved in the aromatic amino acid biosynthesis. The sequence is that of Chorismate mutase AroH from Bacillus subtilis (strain 168).